The chain runs to 120 residues: NAD(P)H-quinone oxidoreductase subunit 3, chloroplastic (120 aa).

Helical transmembrane passes span 9–29, 64–84, and 88–108; these read FFWA…LISG, MFAL…PWAM, and VLGV…IIGL.

It belongs to the complex I subunit 3 family. In terms of assembly, NDH is composed of at least 16 different subunits, 5 of which are encoded in the nucleus.

The protein localises to the plastid. Its subcellular location is the chloroplast thylakoid membrane. The catalysed reaction is a plastoquinone + NADH + (n+1) H(+)(in) = a plastoquinol + NAD(+) + n H(+)(out). The enzyme catalyses a plastoquinone + NADPH + (n+1) H(+)(in) = a plastoquinol + NADP(+) + n H(+)(out). Its function is as follows. NDH shuttles electrons from NAD(P)H:plastoquinone, via FMN and iron-sulfur (Fe-S) centers, to quinones in the photosynthetic chain and possibly in a chloroplast respiratory chain. The immediate electron acceptor for the enzyme in this species is believed to be plastoquinone. Couples the redox reaction to proton translocation, and thus conserves the redox energy in a proton gradient. The polypeptide is NAD(P)H-quinone oxidoreductase subunit 3, chloroplastic (Nicotiana tabacum (Common tobacco)).